The following is a 239-amino-acid chain: MPRKRKCDLRAVRVGLLLGGGGVYGSRFRFTFPGCRALSPWRVRVQRRRCEMSTMFADTLLIVFISVCTALLAEGITWVLVYRTDKYKRLKAEVEKQSKKLEKKKETITESAGRQQKKKIERQEEKLKNNNRDLSMVRMKSMFAIGFCFTALMGMFNSIFDGRVVAKLPFTPLSYIQGLSHRNLLGDDTTDCSFIFLYILCTMSIRQNIQKILGLAPSRAATKQAGGFLGPPPPSGKFS.

The Lumenal portion of the chain corresponds to 1 to 55 (MPRKRKCDLRAVRVGLLLGGGGVYGSRFRFTFPGCRALSPWRVRVQRRRCEMSTM). Residues 56–83 (FADTLLIVFISVCTALLAEGITWVLVYR) form a helical membrane-spanning segment. A coiled-coil region spans residues 83–140 (RTDKYKRLKAEVEKQSKKLEKKKETITESAGRQQKKKIERQEEKLKNNNRDLSMVRMK). Topologically, residues 84–137 (TDKYKRLKAEVEKQSKKLEKKKETITESAGRQQKKKIERQEEKLKNNNRDLSMV) are cytoplasmic. S111 is modified (phosphoserine). A helical transmembrane segment spans residues 138–157 (RMKSMFAIGFCFTALMGMFN). Residues 158–171 (SIFDGRVVAKLPFT) lie on the Lumenal side of the membrane. The stretch at 172 to 181 (PLSYIQGLSH) is an intramembrane region. Residues 182 to 191 (RNLLGDDTTD) lie on the Lumenal side of the membrane. A helical transmembrane segment spans residues 192-213 (CSFIFLYILCTMSIRQNIQKIL). The Cytoplasmic portion of the chain corresponds to 214-239 (GLAPSRAATKQAGGFLGPPPPSGKFS). Position 239 is a phosphoserine (S239).

This sequence belongs to the TMCO1 family. Homodimer and homotetramer. Homodimer under resting conditions; forms homotetramers following ER calcium overload. Component of the GET- and EMC-like (GEL) complex, composed of RAB5IF/OPTI and TMCO1. The GEL complex is part of the multi-pass translocon (MPT) complex, composed of three subcomplexes, the GEL complex (composed of RAB5IF/OPTI and TMCO1), the BOS complex (composed of NCLN/Nicalin, NOMO and TMEM147) and the PAT complex (composed of WDR83OS/Asterix and CCDC47). The MPT complex associates with the SEC61 complex. As to expression, widely expressed in adult and fetal tissues, with higher levels in thymus, prostate, testis and small intestine and lower levels in brain, placenta, lung and kidney. Present in most tissues in the eye, including the trabecular meshwork and retina (at protein level).

Its subcellular location is the endoplasmic reticulum membrane. The protein resides in the golgi apparatus membrane. It is found in the mitochondrion membrane. It catalyses the reaction Ca(2+)(in) = Ca(2+)(out). Its function is as follows. Endoplasmic reticulum (ER) calcium-selective channel preventing intracellular Ca2(+) stores from overfilling and maintaining calcium homeostasis in the ER. In response to endoplasmic reticulum (ER) Ca2(+) overloading, assembles into a homotetramer, forming a functional calcium-selective channel facilitating Ca2(+) release. Mediates ER Ca2(+) homeostasis in osteoblasts and plays a key role in bone formation, via the CaMKII-HDAC4-RUNX2 signaling axis. Component of the multi-pass translocon (MPT) complex that mediates insertion of multi-pass membrane proteins into the lipid bilayer of membranes. The MPT complex takes over after the SEC61 complex: following membrane insertion of the first few transmembrane segments of proteins by the SEC61 complex, the MPT complex occludes the lateral gate of the SEC61 complex to promote insertion of subsequent transmembrane regions. Within the MPT complex, the GEL subcomplex may mediate insertion of transmembrane regions into the membrane. The chain is Calcium load-activated calcium channel from Homo sapiens (Human).